Consider the following 147-residue polypeptide: Protein SOB FIVE-LIKE 2 (147 aa).

The SOFL-A signature appears at 18-23 (SGWTMY). Positions 32–147 (HHSEVVYEEE…ASRVKVSKTK (116 aa)) are disordered. The span at 37–77 (VYEEEDDGFSVKEVDDDGDGDEDDDDDDDDDSSNNESDDSM) shows a compositional bias: acidic residues. Positions 76–85 (SMTSDASSWP) match the SOFL-B motif. Residues 78–93 (TSDASSWPSTHQPPRS) are compositionally biased toward polar residues. Positions 96–106 (NHAAAKNSNAK) are enriched in low complexity. Residues 114–131 (NRVRDRFSDEGEESELKA) are compositionally biased toward basic and acidic residues.

This sequence belongs to the SOFL plant protein family. Predominantly expressed in the vascular tissues of seedlings, developing leaves, flowers and siliques, but barely detectable in roots and stems.

The protein localises to the cytoplasm. It localises to the nucleus. In terms of biological role, involved in cytokinin-mediated development. Together with SOFL2, triggers the endogenous content of specific bioactive cytokinins derived from the biosynthetic intermediates trans-zeatin riboside monophosphate (tZRMP) and N(6)-(Delta(2)-isopentenyl)adenosine monophosphate (iPRMP) such as N-glucosides trans-zeatin 7-glucoside (tZ7G), cis-zeatin 7-glucoside (cZ7G) and N(6)-(Delta(2)-isopentenyl)adenine 7-glucoside (iP7G). In Arabidopsis thaliana (Mouse-ear cress), this protein is Protein SOB FIVE-LIKE 2.